We begin with the raw amino-acid sequence, 895 residues long: Microsomal triglyceride transfer protein large subunit (895 aa).

The signal sequence occupies residues 1-18 (MILLAVLFLCFFSSYSAS). Residues 28-659 (LNNERLYKLT…VFQYLGKAGL (632 aa)) enclose the Vitellogenin domain. Cys-174 and Cys-194 are oxidised to a cystine.

In terms of assembly, heterodimer; heterodimerizes with the protein disulfide isomerase (P4HB/PDI). Interacts with APOB. Interacts with PRAP1.

Its subcellular location is the endoplasmic reticulum. It localises to the golgi apparatus. The catalysed reaction is a 1,2-diacyl-sn-glycero-3-phosphocholine(in) = a 1,2-diacyl-sn-glycero-3-phosphocholine(out). The enzyme catalyses a 1,2-diacyl-sn-glycero-3-phosphoethanolamine(in) = a 1,2-diacyl-sn-glycero-3-phosphoethanolamine(out). It catalyses the reaction a cholesterol ester(in) = a cholesterol ester(out). It carries out the reaction a triacyl-sn-glycerol(in) = a triacyl-sn-glycerol(out). In terms of biological role, catalyzes the transport of triglyceride, cholesteryl ester, and phospholipid between phospholipid surfaces. Required for the assembly and secretion of plasma lipoproteins that contain apolipoprotein B. May be involved in regulating cholesteryl ester biosynthesis in cells that produce lipoproteins. The chain is Microsomal triglyceride transfer protein large subunit (MTTP) from Mesocricetus auratus (Golden hamster).